Here is a 375-residue protein sequence, read N- to C-terminus: Alanine racemase (375 aa).

The active-site Proton acceptor; specific for D-alanine is the lysine 35. Residue lysine 35 is modified to N6-(pyridoxal phosphate)lysine. Arginine 130 is a binding site for substrate. The active-site Proton acceptor; specific for L-alanine is the tyrosine 253. Substrate is bound at residue methionine 305.

It belongs to the alanine racemase family. Pyridoxal 5'-phosphate serves as cofactor.

It carries out the reaction L-alanine = D-alanine. Its pathway is amino-acid biosynthesis; D-alanine biosynthesis; D-alanine from L-alanine: step 1/1. Functionally, catalyzes the interconversion of L-alanine and D-alanine. May also act on other amino acids. This Ralstonia nicotianae (strain ATCC BAA-1114 / GMI1000) (Ralstonia solanacearum) protein is Alanine racemase (alr).